A 204-amino-acid polypeptide reads, in one-letter code: Large ribosomal subunit protein eL15B (204 aa).

The tract at residues 165–185 (TATGKKSRGINKGHKFNNTKA) is disordered. Positions 169 to 185 (KKSRGINKGHKFNNTKA) are enriched in basic residues.

The protein belongs to the eukaryotic ribosomal protein eL15 family. In terms of assembly, component of the large ribosomal subunit (LSU). Mature yeast ribosomes consist of a small (40S) and a large (60S) subunit. The 40S small subunit contains 1 molecule of ribosomal RNA (18S rRNA) and 33 different proteins (encoded by 57 genes). The large 60S subunit contains 3 rRNA molecules (25S, 5.8S and 5S rRNA) and 46 different proteins (encoded by 81 genes).

The protein resides in the cytoplasm. Its function is as follows. Component of the ribosome, a large ribonucleoprotein complex responsible for the synthesis of proteins in the cell. The small ribosomal subunit (SSU) binds messenger RNAs (mRNAs) and translates the encoded message by selecting cognate aminoacyl-transfer RNA (tRNA) molecules. The large subunit (LSU) contains the ribosomal catalytic site termed the peptidyl transferase center (PTC), which catalyzes the formation of peptide bonds, thereby polymerizing the amino acids delivered by tRNAs into a polypeptide chain. The nascent polypeptides leave the ribosome through a tunnel in the LSU and interact with protein factors that function in enzymatic processing, targeting, and the membrane insertion of nascent chains at the exit of the ribosomal tunnel. The chain is Large ribosomal subunit protein eL15B from Saccharomyces cerevisiae (strain ATCC 204508 / S288c) (Baker's yeast).